A 285-amino-acid chain; its full sequence is MSANVQVSGQLSSGPSLPACIVLSAVSLLCFVAGFGTGAEFVRFLSFGAIFRNISGGLDGEIPLTWSEAIRNTQFQCCIGIDIGLLFLFVLQHSLMAWTAVKKNVLHVFGVLQRSIYILCTALSLQVLMRFWQPCPHGPYLWNVSSDPWSAWLPLLCALVHTISWLLIFSVLLIFDYAELMGIKQVYYFCLGMGDPLSHKSPRVARLYAHLRHPIYLELLLILWAVPCLPPDRLILAIFFTLYLSLVHRLDVQDYAYLRSQLEKKFLLFSREEASAVGGQIRKNN.

The Nuclear segment spans residues 1–16 (MSANVQVSGQLSSGPS). Residues 17-44 (LPACIVLSAVSLLCFVAGFGTGAEFVRF) form a helical membrane-spanning segment. At 45-74 (LSFGAIFRNISGGLDGEIPLTWSEAIRNTQ) the chain is on the perinuclear space side. Residues 75-96 (FQCCIGIDIGLLFLFVLQHSLM) form a helical membrane-spanning segment. At 97 to 113 (AWTAVKKNVLHVFGVLQ) the chain is on the nuclear side. The helical transmembrane segment at 114-130 (RSIYILCTALSLQVLMR) threads the bilayer. The Perinuclear space portion of the chain corresponds to 131-149 (FWQPCPHGPYLWNVSSDPW). Residues 150-180 (SAWLPLLCALVHTISWLLIFSVLLIFDYAEL) form a helical membrane-spanning segment. The Nuclear segment spans residues 181–207 (MGIKQVYYFCLGMGDPLSHKSPRVARL). The helical transmembrane segment at 208–226 (YAHLRHPIYLELLLILWAV) threads the bilayer. Residues 227 to 232 (PCLPPD) lie on the Perinuclear space side of the membrane. A helical transmembrane segment spans residues 233 to 250 (RLILAIFFTLYLSLVHRL). The Nuclear segment spans residues 251 to 285 (DVQDYAYLRSQLEKKFLLFSREEASAVGGQIRKNN).

It belongs to the nurim family.

The protein localises to the nucleus inner membrane. The sequence is that of Nurim (nrm) from Xenopus laevis (African clawed frog).